The following is a 316-amino-acid chain: Polyprenyl transferase dpchC (316 aa).

A run of 8 helical transmembrane segments spans residues 24-44, 60-80, 105-125, 154-174, 192-212, 234-254, 258-278, and 296-316; these read PLFT…AKMA, ALCF…NDWI, EAMV…EVML, MLGI…AVIG, CLPL…AYSY, IHLL…IYLF, SLWL…QQLV, and FILG…TGSA.

It belongs to the UbiA prenyltransferase family. Mg(2+) is required as a cofactor.

It localises to the membrane. It participates in secondary metabolite biosynthesis; terpenoid biosynthesis. Its function is as follows. Polyprenyl transferase; part of the gene cluster that mediates the biosynthesis of the diterpenoid pyrones higginsianins A and B. The first step of the pathway is the synthesis of the alpha-pyrone moiety by the polyketide synthase dpchA via condensation of one acetyl-CoA starter unit with 3 malonyl-CoA units and 2 methylations. The alpha-pyrone is then combined with geranylgeranyl pyrophosphate (GGPP) formed by the GGPP synthase dpchD through the action of the prenyltransferase dpchC to yield a linear alpha-pyrone diterpenoid. Subsequent steps in the diterpenoid pyrone biosynthetic pathway involve the decalin core formation, which is initiated by the epoxidation of the C10-C11 olefin by the FAD-dependent oxidoreductase dpchE, and is followed by a cyclization cascade catalyzed by the terpene cyclase dpchB. The short chain dehydrogenase/reductase dpchG then oxidizes the 8S hydroxy group to a ketone and the short chain dehydrogenase/reductase dpchH reduces the ketone to the 8R hydroxy group to yield higginsianin B. Finally, the FAD-dependent oxidoreductase dpchF converts higginsianin B into higginsianin A. The polypeptide is Polyprenyl transferase dpchC (Colletotrichum higginsianum (strain IMI 349063) (Crucifer anthracnose fungus)).